The sequence spans 58 residues: KappaPI-actitoxin-Avd3c (58 aa).

One can recognise a BPTI/Kunitz inhibitor domain in the interval 5–55; it reads CLLPMDVGRCRARHPRYYYNSSSRRCEKFIYGGCRGNANNFITKKECEKVC. 3 disulfides stabilise this stretch: Cys-5-Cys-55, Cys-14-Cys-38, and Cys-30-Cys-51.

Belongs to the venom Kunitz-type family. Sea anemone type 2 potassium channel toxin subfamily.

It is found in the secreted. Its subcellular location is the nematocyst. Its function is as follows. Dual-function toxin that inhibits both the serine protease trypsin (Kd&lt;30 nM) and voltage-gated potassium channels Kv1.2/KCNA2 (IC(50)=1100 nM). The protein is KappaPI-actitoxin-Avd3c of Anemonia sulcata (Mediterranean snakelocks sea anemone).